The primary structure comprises 149 residues: UPF0756 membrane protein Nther_1957 (149 aa).

Transmembrane regions (helical) follow at residues 5–25, 52–72, 85–105, and 111–131; these read IVVL…LVAT, LGIL…DIMP, LIAV…VELL, and VMVG…GVPA.

This sequence belongs to the UPF0756 family.

Its subcellular location is the cell membrane. This Natranaerobius thermophilus (strain ATCC BAA-1301 / DSM 18059 / JW/NM-WN-LF) protein is UPF0756 membrane protein Nther_1957.